The sequence spans 108 residues: UPF0235 protein APE_0182.1 (108 aa).

Belongs to the UPF0235 family.

This is UPF0235 protein APE_0182.1 from Aeropyrum pernix (strain ATCC 700893 / DSM 11879 / JCM 9820 / NBRC 100138 / K1).